Here is a 426-residue protein sequence, read N- to C-terminus: SrfA-induced gene K protein (426 aa).

The signal sequence occupies residues 1–23 (MKKMKILSFFILSLAIIIGIVYS). Asn-64, Asn-136, Asn-160, and Asn-226 each carry an N-linked (GlcNAc...) asparagine glycan. 2 Laminin EGF-like domains span residues 325-348 (DNQCQCSVGFSGDDCRQCDNGMVL) and 384-408 (CNGTCTCLPGFSGNDCTLCGNGGEV). Disulfide bonds link Cys-330–Cys-339, Cys-342–Cys-358, and Cys-370–Cys-388. Residue Asn-385 is glycosylated (N-linked (GlcNAc...) asparagine).

The protein is SrfA-induced gene K protein (sigK) of Dictyostelium discoideum (Social amoeba).